We begin with the raw amino-acid sequence, 186 residues long: Calcium load-activated calcium channel homolog (186 aa).

Topologically, residues 1–6 are cytoplasmic; sequence MLGDCL. The helical transmembrane segment at 7-27 threads the bilayer; the sequence is LIIAIAFGTALAGEGITWLLV. Topologically, residues 28–87 are lumenal; that stretch reads YRSDHYKRLKADMDKKTKKLEKKKQEVGDTNDKNIKRKLEREEERLKATNRDMSMFKMKS. Residues 30-86 are a coiled coil; that stretch reads SDHYKRLKADMDKKTKKLEKKKQEVGDTNDKNIKRKLEREEERLKATNRDMSMFKMK. Residues 88-108 form a helical membrane-spanning segment; the sequence is MFAIGLAFTALLSTFNSIFEG. At 109–134 the chain is on the cytoplasmic side; the sequence is RVVAKLPFYPIGFIQGLSHRNLIGED. The pore-forming intramembrane region spans 135–151; the sequence is MTDCSFIFLYILCTMTV. The Cytoplasmic segment spans residues 152–186; sequence RQNLQKILGFAPSRAMARQQSSPWAPPNSQMNYLR.

This sequence belongs to the TMCO1 family. In terms of assembly, homodimer and homotetramer.

It localises to the endoplasmic reticulum membrane. Calcium-selective channel required to prevent calcium stores from overfilling. The polypeptide is Calcium load-activated calcium channel homolog (Caenorhabditis elegans).